The chain runs to 435 residues: Citrate synthase (435 aa).

Active-site residues include H311 and D370.

The protein belongs to the citrate synthase family.

It carries out the reaction oxaloacetate + acetyl-CoA + H2O = citrate + CoA + H(+). It participates in carbohydrate metabolism; tricarboxylic acid cycle; isocitrate from oxaloacetate: step 1/2. The sequence is that of Citrate synthase (gltA) from Rickettsia slovaca (strain 13-B).